Here is a 272-residue protein sequence, read N- to C-terminus: Hematopoietically-expressed homeobox protein hhex (272 aa).

The homeobox DNA-binding region spans 137–196 (RKGGQVRFSNDQTIELEKKFETQKYLSPPERKRLAKMLQLSERQVKTWFQNRRAKWRRLK). Positions 222 to 272 (CLSAEQKSRESSLDDPTSSPTSQGNLDSEVSDDSDQEVDIEGDKGYYNCAH) are disordered. Residues 250–261 (EVSDDSDQEVDI) show a composition bias toward acidic residues.

First expressed in the dorsal endomesoderm of the gastrula stage embryo. The dorsal endomesoderm contributes to forming the embryonic liver, and expression continues in the liver throughout development. Also expressed in precursors of the developing thyroid gland, and beginning at the tailbud stage, expressed in the ventral region of the head. Also transiently expressed in the endothelial layer of developing vascular tissues of the embryo, beginning at the tailbud stages.

The protein resides in the nucleus. Its function is as follows. Recognizes the DNA sequence 5'-ATTAA-3'. Transcriptional repressor. Regulates the differentiation of both endothelial and blood cells. Probably plays a role in the proliferation of vascular endothelial cells during blood vessel development. Establishes anterior identity at two levels; acts early to enhance canonical wnt-signaling by repressing expression of tle4, and acts later to inhibit nodal-signaling by directly targeting nodal/nr1 and nodal2/nr2. May play a role in liver development. Induces heart development. The sequence is that of Hematopoietically-expressed homeobox protein hhex from Xenopus laevis (African clawed frog).